A 587-amino-acid polypeptide reads, in one-letter code: GTPase-activating protein skywalker (587 aa).

2 residues coordinate a 1,2-diacyl-sn-glycero-3-phospho-(1D-myo-inositol): lysine 75 and arginine 79. The region spanning 84–275 (PINSPIRAQL…RIMDCYFHEG (192 aa)) is the Rab-GAP TBC domain. A 1,2-diacyl-sn-glycero-3-phospho-(1D-myo-inositol) is bound by residues lysine 277, arginine 281, and 335 to 339 (RGLST). A TLDc domain is found at 408–585 (TWTDRQFLFT…IRVLEVYGFV (178 aa)).

In terms of tissue distribution, detected in the larval ventral nerve cord and neuromuscular junction boutons (at protein level).

It is found in the cytoplasmic vesicle. It localises to the secretory vesicle. The protein resides in the synaptic vesicle membrane. The protein localises to the endosome membrane. In terms of biological role, GTPase-activating protein (GAP) for Rab35 which regulates synaptic vesicle (SV) protein recycling and turnover at the neuromuscular junction boutons and possibly ventral nerve cord via endosomal trafficking. Inhibits Rab35-mediated endosomal sorting which traffics old or dysfunctional SV proteins through a degradative endolysosomal route that involves the ESCRT pathway and the HOPS complex members dor, vps39 and rab7. This function is essential for preventing excessive degradation and turnover of vesicles from the readily releasable pool which leads to increased neurotransmission and eventually neurodegeneration. Preferentially binds phosphoinositides phosphorylated at the D5 position of the inositol ring, such as phosphatidylinositol 4,5-bisphosphate (PIP2) and phosphatidylinositol 3,4,5-trisphosphate (PIP3). Binding to phosphoinositides and thus membrane-association, is required for its function in regulating the turnover of synaptic-vesicle proteins. It is therefore likely that it is recruited to vesicle membranes with high phosphoinositide content and thereby selectively prevents endolysosomal degradation of these vesicles. This Drosophila melanogaster (Fruit fly) protein is GTPase-activating protein skywalker.